The following is a 483-amino-acid chain: MKTLNRRDFPGAQYPERIIQFGEGNFLRAFVDWQIDLLNEHTDLNSGVVVVRPIETSFPPSLSTQDGLYTTIIRGLNEKGEAVSDARLIRSVNREISVYSEYDEFLKLAHNPEMRFVFSNTTEAGISYHAGDKFDDAPAVSYPAKLTRLLFERFSHFNGALDKGWIIIPCELIDYNGDALRELVLRYAQEWALPEAFIQWLDQANSFCSTLVDRIVTGYPRDEVAKLEEELGYHDGFLDTAEYFYLFVIQGPKSLATELRLDKYPLNVLIVDDIKPYKERKVAILNGAHTALVPVAFQAGLDTVGEAMNDAEICAFVEKAIYEEIIPVLDLPRDELESFASAVTGRFRNPYIKHQLLSIALNGMTKFRTRILPQLLAGQKANGTLPARLTFALAALIAFYRGERNGETYPVQDDAHWLERYQQLWSQYRDRVIGTQELVAIVLAEKDHWEQDLTQVPGLVEQVANDLDAILEKGMREAVRPLC.

An NAD(+)-binding site is contributed by 18–29 (IIQFGEGNFLRA).

It belongs to the mannitol dehydrogenase family. UxaB subfamily.

The enzyme catalyses D-altronate + NAD(+) = keto-D-tagaturonate + NADH + H(+). It participates in carbohydrate metabolism; pentose and glucuronate interconversion. The polypeptide is Altronate oxidoreductase (Escherichia coli O6:K15:H31 (strain 536 / UPEC)).